A 208-amino-acid chain; its full sequence is Uracil phosphoribosyltransferase (208 aa).

Residues R78, R103, and 130-138 (DPMLATGGS) each bind 5-phospho-alpha-D-ribose 1-diphosphate. Uracil-binding positions include I193 and 198-200 (GDA). D199 contacts 5-phospho-alpha-D-ribose 1-diphosphate.

It belongs to the UPRTase family. Mg(2+) is required as a cofactor.

The catalysed reaction is UMP + diphosphate = 5-phospho-alpha-D-ribose 1-diphosphate + uracil. It functions in the pathway pyrimidine metabolism; UMP biosynthesis via salvage pathway; UMP from uracil: step 1/1. With respect to regulation, allosterically activated by GTP. In terms of biological role, catalyzes the conversion of uracil and 5-phospho-alpha-D-ribose 1-diphosphate (PRPP) to UMP and diphosphate. This chain is Uracil phosphoribosyltransferase, found in Shewanella baltica (strain OS223).